Here is a 704-residue protein sequence, read N- to C-terminus: MFLFSDGLQSINNNNRRKRIVKNAYIPSRGIRKIPHLSTLLPEFHIYKDGKGAEAVVGWGLRPTTHKARAFATEHQLPFIALEDGFLRSLGLGVSGYPPYSIVYDDIGIYYDTTRPSRLEQLILAADTMPSETLAQARQAMDFILQHHLSKYNHAPELSDDHPLRSPSKSETVLIIDQTFGDMAIQYGGADASTFELMFQTALNENPQADIWVKTHPDVLCGKKQGYLTQLVQQHRVHLLAEDINPISLLQNVDKVYCVTSQMGFEALLCGKPLTTFGLPWYAGWGVSDDRHPKIGSLIQTQRRAPRNLLQLFAAAYLQYSRYLNPNTGEAGSLFDVIDYLATVKRKNDKLRGELYCVGMSLWKRAVAKPFFNVPSCRLKFISSTQKLARVKLSDDARILAWGNGKEAIVRFAEQHHIPLLRMEDGFIRSVGLGSNLVPPLSLVTDDMSIYFNAETPSRLEYILQNQNFDDQDFQTALKLQKMLTENHISKYNVGSSDFTAPSTDKTVILVPGQVEDDASIRYGSPQIYRNLDLLRTVRERNPNAYIIYKPHPDVVSGNRIGHISPDDAARYADQTAEQADILTCLQYADEIHTMTSLTGFEALLRGKKVSCYGLPFYAGWGLTQDLLPIPRRSRRLELWQLVAGTLIYYPDYIHPKTHQAINAETAAQILIRQKNMQKNNNGLHRGCFAKKLGKIKQLYRSFK.

The protein resides in the cell inner membrane. Involved in the phospholipid modification of the capsular polysaccharide, a strong requirement for its translocation to the cell surface. The protein is Capsule polysaccharide modification protein LipA (lipA) of Neisseria meningitidis serogroup A / serotype 4A (strain DSM 15465 / Z2491).